Here is a 304-residue protein sequence, read N- to C-terminus: Dermonecrotic toxin LiSicTox-betaIA1ii (304 aa).

Residues 1–21 (MLLCAVISFIVYAVFLQEANG) form the signal peptide. Positions 22–26 (HAAER) are excised as a propeptide. His38 is an active-site residue. 2 residues coordinate Mg(2+): Glu58 and Asp60. Catalysis depends on His74, which acts as the Nucleophile. Disulfide bonds link Cys78-Cys84 and Cys80-Cys223. Asp118 serves as a coordination point for Mg(2+).

The protein belongs to the arthropod phospholipase D family. Class II subfamily. Mg(2+) serves as cofactor. As to expression, expressed by the venom gland.

Its subcellular location is the secreted. It carries out the reaction an N-(acyl)-sphingosylphosphocholine = an N-(acyl)-sphingosyl-1,3-cyclic phosphate + choline. The catalysed reaction is an N-(acyl)-sphingosylphosphoethanolamine = an N-(acyl)-sphingosyl-1,3-cyclic phosphate + ethanolamine. The enzyme catalyses a 1-acyl-sn-glycero-3-phosphocholine = a 1-acyl-sn-glycero-2,3-cyclic phosphate + choline. It catalyses the reaction a 1-acyl-sn-glycero-3-phosphoethanolamine = a 1-acyl-sn-glycero-2,3-cyclic phosphate + ethanolamine. Functionally, dermonecrotic toxins cleave the phosphodiester linkage between the phosphate and headgroup of certain phospholipids (sphingolipid and lysolipid substrates), forming an alcohol (often choline) and a cyclic phosphate. This toxin acts on sphingomyelin (SM) with low activity. It may also act on ceramide phosphoethanolamine (CPE), lysophosphatidylcholine (LPC) and lysophosphatidylethanolamine (LPE), but not on lysophosphatidylserine (LPS), and lysophosphatidylglycerol (LPG). It acts by transphosphatidylation, releasing exclusively cyclic phosphate products as second products. Induces dermonecrosis, hemolysis, increased vascular permeability, edema, inflammatory response, and platelet aggregation. The chain is Dermonecrotic toxin LiSicTox-betaIA1ii from Loxosceles intermedia (Brown spider).